Reading from the N-terminus, the 938-residue chain is Isoleucine--tRNA ligase (938 aa).

The short motif at 58–68 (PYANGSIHIGH) is the 'HIGH' region element. An N6-acetyllysine modification is found at K183. E561 lines the L-isoleucyl-5'-AMP pocket. Residues 602–606 (KMSKS) carry the 'KMSKS' region motif. K605 is a binding site for ATP. 4 residues coordinate Zn(2+): C901, C904, C921, and C924.

This sequence belongs to the class-I aminoacyl-tRNA synthetase family. IleS type 1 subfamily. As to quaternary structure, monomer. Requires Zn(2+) as cofactor.

The protein resides in the cytoplasm. It catalyses the reaction tRNA(Ile) + L-isoleucine + ATP = L-isoleucyl-tRNA(Ile) + AMP + diphosphate. Catalyzes the attachment of isoleucine to tRNA(Ile). As IleRS can inadvertently accommodate and process structurally similar amino acids such as valine, to avoid such errors it has two additional distinct tRNA(Ile)-dependent editing activities. One activity is designated as 'pretransfer' editing and involves the hydrolysis of activated Val-AMP. The other activity is designated 'posttransfer' editing and involves deacylation of mischarged Val-tRNA(Ile). This Escherichia coli O127:H6 (strain E2348/69 / EPEC) protein is Isoleucine--tRNA ligase.